The following is a 121-amino-acid chain: Large ribosomal subunit protein uL14 (121 aa).

It belongs to the universal ribosomal protein uL14 family. Part of the 50S ribosomal subunit. Forms a cluster with proteins L3 and L19. In the 70S ribosome, L14 and L19 interact and together make contacts with the 16S rRNA in bridges B5 and B8.

In terms of biological role, binds to 23S rRNA. Forms part of two intersubunit bridges in the 70S ribosome. The chain is Large ribosomal subunit protein uL14 from Prochlorococcus marinus (strain MIT 9303).